The primary structure comprises 250 residues: Pyrroloquinoline-quinone synthase (250 aa).

It belongs to the PqqC family.

It catalyses the reaction 6-(2-amino-2-carboxyethyl)-7,8-dioxo-1,2,3,4,7,8-hexahydroquinoline-2,4-dicarboxylate + 3 O2 = pyrroloquinoline quinone + 2 H2O2 + 2 H2O + H(+). Its pathway is cofactor biosynthesis; pyrroloquinoline quinone biosynthesis. Ring cyclization and eight-electron oxidation of 3a-(2-amino-2-carboxyethyl)-4,5-dioxo-4,5,6,7,8,9-hexahydroquinoline-7,9-dicarboxylic-acid to PQQ. In Xanthomonas euvesicatoria pv. vesicatoria (strain 85-10) (Xanthomonas campestris pv. vesicatoria), this protein is Pyrroloquinoline-quinone synthase.